Consider the following 188-residue polypeptide: PRA1 family protein 3 (188 aa).

Position 1 is an N-acetylmethionine (M1). Residues 1 to 35 (MEVQVAPLRSWEDFFPGSDRFGRPDFKDISKWNNR) are Cytoplasmic-facing. The next 2 helical transmembrane spans lie at 36–56 (VVNNLLYYQTNYLMVAAAVVA) and 57–77 (IVGFLSPLNMLIGGTVVILVF). Residues 78-93 (LGFVWVSHNKDILRRM) lie on the Cytoplasmic side of the membrane. 2 helical membrane passes run 94 to 114 (KKQYPTTFVIVIMLSSYFLIS) and 115 to 135 (YLGDVMVFMFGITLPLLLMFI). Over 136–188 (HASLRLRNIKNKLENKKEEIGLKKTPMGIILDALEQQEDNINKLASYIPKVKE) the chain is Cytoplasmic. The interval 136–188 (HASLRLRNIKNKLENKKEEIGLKKTPMGIILDALEQQEDNINKLASYIPKVKE) is targeting to endoplasmic reticulum membrane.

This sequence belongs to the PRA1 family. Binds to prenylated RAB and Ras superfamily members.

Its subcellular location is the endoplasmic reticulum membrane. It is found in the cell membrane. The protein localises to the cytoplasm. The protein resides in the cytoskeleton. Functionally, regulates intracellular concentrations of taurine and glutamate. Negatively modulates SLC1A1/EAAC1 glutamate transport activity by decreasing its affinity for glutamate in a PKC activity-dependent manner. May be involved in membrane traffic. The chain is PRA1 family protein 3 (ARL6IP5) from Gallus gallus (Chicken).